The following is a 283-amino-acid chain: 4-diphosphocytidyl-2-C-methyl-D-erythritol kinase (283 aa).

Residue Lys-9 is part of the active site. 93 to 103 (PIAAGLAGGSS) contacts ATP. Residue Asp-135 is part of the active site.

It belongs to the GHMP kinase family. IspE subfamily.

It carries out the reaction 4-CDP-2-C-methyl-D-erythritol + ATP = 4-CDP-2-C-methyl-D-erythritol 2-phosphate + ADP + H(+). It functions in the pathway isoprenoid biosynthesis; isopentenyl diphosphate biosynthesis via DXP pathway; isopentenyl diphosphate from 1-deoxy-D-xylulose 5-phosphate: step 3/6. Functionally, catalyzes the phosphorylation of the position 2 hydroxy group of 4-diphosphocytidyl-2C-methyl-D-erythritol. This Macrococcus caseolyticus (strain JCSC5402) (Macrococcoides caseolyticum) protein is 4-diphosphocytidyl-2-C-methyl-D-erythritol kinase.